The primary structure comprises 986 residues: P3N-PIPO polyprotein (986 aa).

The 144-residue stretch at 141 to 284 (KLTEGQMNHL…QGVMDSMVQF (144 aa)) folds into the Peptidase S30 domain. Active-site for P1 proteinase activity residues include His-192, Asp-201, and Ser-235. The short motif at 334–337 (KITC) is the Involved in interaction with stylet and aphid transmission element. The Involved in virions binding and aphid transmission signature appears at 592–594 (PTK). A Peptidase C6 domain is found at 618–740 (LYIARQGFCY…ESDIKHYRVG (123 aa)). Catalysis depends on for helper component proteinase activity residues Cys-626 and His-699.

This sequence belongs to the potyviridae P3N-PIPO polyprotein family. Interacts (via PIPO domain) with host PCaP1 protein; this interaction may help to anchor the movement complex to the plasma membrane from which the complex could move to the plasmodesmata. Potyviral RNA is expressed as two polyproteins which undergo post-translational proteolytic processing. Genome polyprotein is processed by NIa-pro, P1 and HC-pro proteinases resulting in the production of at least ten individual proteins. P3N-PIPO is cleaved by P1 and HC-pro proteinases resulting in the production of three individual proteins. The P1 proteinase and the HC-pro cleave only their respective C-termini autocatalytically.

The protein localises to the host cell junction. The protein resides in the host plasmodesma. The catalysed reaction is Hydrolyzes a Gly-|-Gly bond at its own C-terminus, commonly in the sequence -Tyr-Xaa-Val-Gly-|-Gly, in the processing of the potyviral polyprotein.. Functionally, required for aphid transmission and also has proteolytic activity. Only cleaves a Gly-Gly dipeptide at its own C-terminus. Interacts with virions and aphid stylets. Acts as a suppressor of RNA-mediated gene silencing, also known as post-transcriptional gene silencing (PTGS), a mechanism of plant viral defense that limits the accumulation of viral RNAs. May have RNA-binding activity. In terms of biological role, allows efficient cell to cell propagation, by bypassing the host cell wall barrier. Transports viral genome to neighboring plant cells directly through plasmosdesmata, without any budding. The protein is P3N-PIPO polyprotein of Capsicum (peppers).